The sequence spans 160 residues: MSDDDHHFESSADAGASKTYPQQAGTIRKSGHIVIKNRPCKVVEVSTSKTGKHGHAKCHFVAIDIFNGKKLEDIVPSSHNCDVPHVNRVDYQLLDITEDGFVSLLTDSGDTKDDLKLPADEALVKQMKEGFEAGKDLILSVMCAMGEEQICAVKDVSGGK.

Basic and acidic residues predominate over residues Met-1 to Ser-10. Residues Met-1–Gln-23 are disordered. Hypusine is present on Lys-52.

Belongs to the eIF-5A family. In terms of processing, lys-52 undergoes hypusination, a unique post-translational modification that consists in the addition of a butylamino group from spermidine to lysine side chain, leading to the formation of the unusual amino acid hypusine. eIF-5As are the only known proteins to undergo this modification, which is essential for their function.

Functionally, translation factor that promotes translation elongation and termination, particularly upon ribosome stalling at specific amino acid sequence contexts. Binds between the exit (E) and peptidyl (P) site of the ribosome and promotes rescue of stalled ribosome: specifically required for efficient translation of polyproline-containing peptides as well as other motifs that stall the ribosome. Acts as a ribosome quality control (RQC) cofactor by joining the RQC complex to facilitate peptidyl transfer during CAT tailing step. The protein is Eukaryotic translation initiation factor 5A of Dianthus caryophyllus (Carnation).